The sequence spans 208 residues: Probable GTP-binding protein EngB (208 aa).

In terms of domain architecture, EngB-type G spans 23 to 205; that stretch reads LTSEMVILGR…RQTLLKYLLT (183 aa). Residues 31–38, 57–61, 84–87, 154–157, and 182–184 contribute to the GTP site; these read GRSNVGKS, GKTRL, DLPG, TKFD, and FNA. 2 residues coordinate Mg(2+): serine 38 and threonine 59.

Belongs to the TRAFAC class TrmE-Era-EngA-EngB-Septin-like GTPase superfamily. EngB GTPase family. It depends on Mg(2+) as a cofactor.

Its function is as follows. Necessary for normal cell division and for the maintenance of normal septation. This Helicobacter pylori (strain HPAG1) protein is Probable GTP-binding protein EngB.